Reading from the N-terminus, the 165-residue chain is Adenine phosphoribosyltransferase (165 aa).

Belongs to the purine/pyrimidine phosphoribosyltransferase family. In terms of assembly, homodimer.

It localises to the cytoplasm. The catalysed reaction is AMP + diphosphate = 5-phospho-alpha-D-ribose 1-diphosphate + adenine. The protein operates within purine metabolism; AMP biosynthesis via salvage pathway; AMP from adenine: step 1/1. Catalyzes a salvage reaction resulting in the formation of AMP, that is energically less costly than de novo synthesis. The sequence is that of Adenine phosphoribosyltransferase from Bdellovibrio bacteriovorus (strain ATCC 15356 / DSM 50701 / NCIMB 9529 / HD100).